The chain runs to 248 residues: 2,3-bisphosphoglycerate-dependent phosphoglycerate mutase (248 aa).

Substrate is bound by residues 8–15, 21–22, Arg-60, 87–90, Lys-98, 114–115, and 183–184; these read RHGESLWN, TG, ERHY, RR, and GN. Catalysis depends on His-9, which acts as the Tele-phosphohistidine intermediate. Residue Glu-87 is the Proton donor/acceptor of the active site.

This sequence belongs to the phosphoglycerate mutase family. BPG-dependent PGAM subfamily.

The catalysed reaction is (2R)-2-phosphoglycerate = (2R)-3-phosphoglycerate. Its pathway is carbohydrate degradation; glycolysis; pyruvate from D-glyceraldehyde 3-phosphate: step 3/5. Functionally, catalyzes the interconversion of 2-phosphoglycerate and 3-phosphoglycerate. In Methanospirillum hungatei JF-1 (strain ATCC 27890 / DSM 864 / NBRC 100397 / JF-1), this protein is 2,3-bisphosphoglycerate-dependent phosphoglycerate mutase.